A 91-amino-acid polypeptide reads, in one-letter code: Potassium channel toxin BmTXK-beta-2 (91 aa).

A signal peptide spans 1-19; the sequence is MQRNLVVLLFLGMVALSSC. Residues 20–27 constitute a propeptide that is removed on maturation; sequence GLREKHFQ. Positions 54-91 constitute a BetaSPN-type CS-alpha/beta domain; the sequence is QFGCPAYQGYCDDHCQDIKKEEGFCHGFKCKCGIPMGF. Intrachain disulfides connect Cys57–Cys78, Cys64–Cys83, and Cys68–Cys85.

This sequence belongs to the long chain scorpion toxin family. Class 1 subfamily. As to expression, expressed by the venom gland.

The protein localises to the secreted. Functionally, inhibits voltage-gated potassium channel. The sequence is that of Potassium channel toxin BmTXK-beta-2 from Olivierus martensii (Manchurian scorpion).